Here is a 330-residue protein sequence, read N- to C-terminus: Malate dehydrogenase (330 aa).

An NAD(+)-binding site is contributed by 11 to 17 (GGAGQIA). Substrate-binding residues include arginine 92 and arginine 98. NAD(+)-binding positions include asparagine 105, glutamine 112, and 129–131 (VGN). Residues asparagine 131 and arginine 162 each coordinate substrate. Catalysis depends on histidine 187, which acts as the Proton acceptor.

The protein belongs to the LDH/MDH superfamily. MDH type 2 family.

It catalyses the reaction (S)-malate + NAD(+) = oxaloacetate + NADH + H(+). Its function is as follows. Catalyzes the reversible oxidation of malate to oxaloacetate. The chain is Malate dehydrogenase from Protochlamydia amoebophila (strain UWE25).